Reading from the N-terminus, the 166-residue chain is NAD(P)H-quinone oxidoreductase subunit I, chloroplastic (166 aa).

4Fe-4S ferredoxin-type domains follow at residues 55-84 (GRIH…VDWK) and 95-124 (LNYS…MTEE). 8 residues coordinate [4Fe-4S] cluster: Cys-64, Cys-67, Cys-70, Cys-74, Cys-104, Cys-107, Cys-110, and Cys-114.

The protein belongs to the complex I 23 kDa subunit family. NDH is composed of at least 16 different subunits, 5 of which are encoded in the nucleus. [4Fe-4S] cluster serves as cofactor.

It localises to the plastid. The protein localises to the chloroplast thylakoid membrane. It catalyses the reaction a plastoquinone + NADH + (n+1) H(+)(in) = a plastoquinol + NAD(+) + n H(+)(out). It carries out the reaction a plastoquinone + NADPH + (n+1) H(+)(in) = a plastoquinol + NADP(+) + n H(+)(out). NDH shuttles electrons from NAD(P)H:plastoquinone, via FMN and iron-sulfur (Fe-S) centers, to quinones in the photosynthetic chain and possibly in a chloroplast respiratory chain. The immediate electron acceptor for the enzyme in this species is believed to be plastoquinone. Couples the redox reaction to proton translocation, and thus conserves the redox energy in a proton gradient. The protein is NAD(P)H-quinone oxidoreductase subunit I, chloroplastic of Oblivia mikanioides (Salmea mikanioides).